Reading from the N-terminus, the 35-residue chain is Photosystem II reaction center protein T (35 aa).

A helical transmembrane segment spans residues 3–23; that stretch reads ALVYTFLLVSTLGIIFFAIFF.

Belongs to the PsbT family. PSII is composed of 1 copy each of membrane proteins PsbA, PsbB, PsbC, PsbD, PsbE, PsbF, PsbH, PsbI, PsbJ, PsbK, PsbL, PsbM, PsbT, PsbY, PsbZ, Psb30/Ycf12, at least 3 peripheral proteins of the oxygen-evolving complex and a large number of cofactors. It forms dimeric complexes.

It is found in the plastid. It localises to the chloroplast thylakoid membrane. Found at the monomer-monomer interface of the photosystem II (PS II) dimer, plays a role in assembly and dimerization of PSII. PSII is a light-driven water plastoquinone oxidoreductase, using light energy to abstract electrons from H(2)O, generating a proton gradient subsequently used for ATP formation. The polypeptide is Photosystem II reaction center protein T (Pinus thunbergii (Japanese black pine)).